Consider the following 742-residue polypeptide: Collectin-12 (742 aa).

At 1 to 37 (MKDDFAEEEEVQSFGYKRFGIQEGTQCTKCKNNWALK) the chain is on the cytoplasmic side. Residues 38–58 (FSIVLLYILCALLTITVAILG) traverse the membrane as a helical; Signal-anchor for type II membrane protein segment. Residues 59-742 (YKVVEKMDNV…EREAVPSSIL (684 aa)) are Extracellular-facing. N67 is a glycosylation site (N-linked (GlcNAc...) asparagine). Residues 73 to 142 (ETSHQTYDNK…KDTLEKLQAN (70 aa)) adopt a coiled-coil conformation. 2 N-linked (GlcNAc...) asparagine glycosylation sites follow: N159 and N168. Positions 205-254 (NLNNLNLTQVQQRNLISNLQQSVDDTSLAIQRIKNDFQNLQQVFLQAKKD) form a coiled coil. Residue N271 is glycosylated (N-linked (GlcNAc...) asparagine). Residues 439-608 (TILQGPPGPR…TPASEVNGCP (170 aa)) are disordered. 2 consecutive Collagen-like domains span residues 452–511 (GDRG…KGSR) and 527–586 (GPPG…PGPS). Residues 501-514 (SKGSQGPKGSRGSP) show a composition bias toward low complexity. A compositionally biased stretch (pro residues) spans 516-532 (KPGPQGPSGDPGPPGPP). A compositionally biased stretch (low complexity) spans 534–556 (KDGLPGPQGPPGFQGLQGTVGEP). Pro residues predominate over residues 571–585 (PGMPGPKGPPGPPGP). Cystine bridges form between C607–C618, C635–C730, and C708–C722. Residues 614-731 (FTDKCYYFSL…CDEINNFICE (118 aa)) form the C-type lectin domain. F644, N646, E650, D670, and E674 together coordinate Ca(2+). K691, Q694, and D696 together coordinate a carbohydrate. 8 residues coordinate Ca(2+): Q694, D696, N697, E706, D707, N718, D719, and E731. E706 is an a carbohydrate binding site. Positions 718 and 719 each coordinate a carbohydrate.

In terms of assembly, the extracellular domain forms a stable trimer. The extracellular domain interacts with fibrillar amyloid-beta peptide. As to expression, expressed in vascular endothelial cells in the heart, in perivascular macrophage and smooth muscle cells. Expressed in plaques-surrounding reactive astrocytes located in cerebral cortex and hippocampus and in leptomeningeal vessels showing characteristics of cerebral amyloid angiopathy (CAA) in a double transgenic mouse model of Alzheimer disease (at protein level). Strongly expressed in lung. Moderately expressed in heart, skeletal muscle, spleen, liver, brain, colon, testis, stomach and kidney. Expressed in neonatal astrocytes. Expressed in reactive astrocytes and vascular/perivascular cells in the brain of a double transgenic mouse model of Alzheimer disease.

Its subcellular location is the membrane. Its function is as follows. Scavenger receptor that displays several functions associated with host defense. Promotes binding and phagocytosis of Gram-positive, Gram-negative bacteria and yeast. Also binds to sialyl Lewis X or a trisaccharide and asialo-orosomucoid (ASOR). Mediates the recognition, internalization and degradation of oxidatively modified low density lipoprotein (oxLDL) by vascular endothelial cells. Binds to several carbohydrates including Gal-type ligands, D-galactose, L- and D-fucose, GalNAc, T and Tn antigens in a calcium-dependent manner and internalizes specifically GalNAc in nurse-like cells. The sequence is that of Collectin-12 (Colec12) from Mus musculus (Mouse).